Here is a 378-residue protein sequence, read N- to C-terminus: Protein RecA (378 aa).

79–86 (GPESSGKT) contributes to the ATP binding site.

Belongs to the RecA family.

The protein localises to the cytoplasm. Can catalyze the hydrolysis of ATP in the presence of single-stranded DNA, the ATP-dependent uptake of single-stranded DNA by duplex DNA, and the ATP-dependent hybridization of homologous single-stranded DNAs. It interacts with LexA causing its activation and leading to its autocatalytic cleavage. The chain is Protein RecA from Streptococcus pyogenes serotype M2 (strain MGAS10270).